We begin with the raw amino-acid sequence, 525 residues long: GMP synthase [glutamine-hydrolyzing] (525 aa).

The Glutamine amidotransferase type-1 domain occupies 8–207 (KILILDFGSQ…ALDICGCAAN (200 aa)). Residue C85 is the Nucleophile of the active site. Catalysis depends on residues H181 and E183. In terms of domain architecture, GMPS ATP-PPase spans 208–400 (WKPSSIIEDA…LGLPYNMLYR (193 aa)). 235 to 241 (SGGVDSS) contacts ATP.

As to quaternary structure, homodimer.

The catalysed reaction is XMP + L-glutamine + ATP + H2O = GMP + L-glutamate + AMP + diphosphate + 2 H(+). It participates in purine metabolism; GMP biosynthesis; GMP from XMP (L-Gln route): step 1/1. Functionally, catalyzes the synthesis of GMP from XMP. This Shewanella sp. (strain ANA-3) protein is GMP synthase [glutamine-hydrolyzing].